The following is a 1111-amino-acid chain: Kinesin-like protein KIP1 (1111 aa).

A compositionally biased stretch (polar residues) spans Met1 to Thr11. The tract at residues Met1 to Met34 is disordered. Positions Asn52–Ile410 constitute a Kinesin motor domain. Gly141–Thr148 lines the ATP pocket. Coiled-coil stretches lie at residues Thr424–Asn510, Lys648–Ser670, Lys710–Ile780, and His808–Leu828. A compositionally biased stretch (basic and acidic residues) spans Ala1007–Ser1016. Residues Ala1007–Gln1111 form a disordered region. Polar residues-rich tracts occupy residues Asn1017–Pro1038 and Ser1057–Asn1082.

Belongs to the TRAFAC class myosin-kinesin ATPase superfamily. Kinesin family. BimC subfamily. Might be dimeric.

The protein localises to the cytoplasm. Its subcellular location is the cytoskeleton. It localises to the spindle. Required for assembly of the mitotic spindle. Interacts with spindle microtubules to produce an outwardly directed force acting upon the poles. Following spindle assembly, CIN8 and KIP1 apparently act to oppose a force that draws separated poles back together. This force seems to be mediate by KAR3. In Saccharomyces cerevisiae (strain ATCC 204508 / S288c) (Baker's yeast), this protein is Kinesin-like protein KIP1 (KIP1).